A 239-amino-acid polypeptide reads, in one-letter code: Large ribosomal subunit protein uL3 (239 aa).

An N5-methylglutamine modification is found at Gln151.

Belongs to the universal ribosomal protein uL3 family. As to quaternary structure, part of the 50S ribosomal subunit. Forms a cluster with proteins L14 and L19. In terms of processing, methylated by PrmB.

Functionally, one of the primary rRNA binding proteins, it binds directly near the 3'-end of the 23S rRNA, where it nucleates assembly of the 50S subunit. The chain is Large ribosomal subunit protein uL3 from Ruegeria sp. (strain TM1040) (Silicibacter sp.).